Consider the following 86-residue polypeptide: UPF0297 protein SH1302 (86 aa).

It belongs to the UPF0297 family.

The polypeptide is UPF0297 protein SH1302 (Staphylococcus haemolyticus (strain JCSC1435)).